The primary structure comprises 360 residues: Photosystem II protein D1 3 (360 aa).

3 helical membrane passes run 29–46 (YVGW…AATV), 118–133 (HFLI…QWEL), and 142–156 (WICV…SATA). His118 contacts chlorophyll a. Residue Tyr126 coordinates pheophytin a. 2 residues coordinate [CaMn4O5] cluster: Asp170 and Glu189. A helical membrane pass occupies residues 197–218 (FHMLGVAGVFGGSLFSAMHGSL). Residue His198 participates in chlorophyll a binding. A quinone contacts are provided by residues His215 and 264–265 (SF). His215 is a Fe cation binding site. His272 is a Fe cation binding site. A helical membrane pass occupies residues 274 to 288 (FLAAWPVIGIWFTAL). Residues His332, Glu333, Asp342, and Ala344 each contribute to the [CaMn4O5] cluster site. Residues 345–360 (AGEVAPVALTAPAING) constitute a propeptide that is removed on maturation.

Belongs to the reaction center PufL/M/PsbA/D family. PSII is composed of 1 copy each of membrane proteins PsbA, PsbB, PsbC, PsbD, PsbE, PsbF, PsbH, PsbI, PsbJ, PsbK, PsbL, PsbM, PsbT, PsbX, PsbY, PsbZ, Psb30/Ycf12, peripheral proteins PsbO, CyanoQ (PsbQ), PsbU, PsbV and a large number of cofactors. It forms dimeric complexes. The D1/D2 heterodimer binds P680, chlorophylls that are the primary electron donor of PSII, and subsequent electron acceptors. It shares a non-heme iron and each subunit binds pheophytin, quinone, additional chlorophylls, carotenoids and lipids. D1 provides most of the ligands for the Mn4-Ca-O5 cluster of the oxygen-evolving complex (OEC). There is also a Cl(-1) ion associated with D1 and D2, which is required for oxygen evolution. The PSII complex binds additional chlorophylls, carotenoids and specific lipids. is required as a cofactor. In terms of processing, tyr-161 forms a radical intermediate that is referred to as redox-active TyrZ, YZ or Y-Z. Post-translationally, C-terminally processed by CtpA; processing is essential to allow assembly of the oxygen-evolving complex and thus photosynthetic growth.

The protein resides in the cellular thylakoid membrane. The catalysed reaction is 2 a plastoquinone + 4 hnu + 2 H2O = 2 a plastoquinol + O2. Its function is as follows. Photosystem II (PSII) is a light-driven water:plastoquinone oxidoreductase that uses light energy to abstract electrons from H(2)O, generating O(2) and a proton gradient subsequently used for ATP formation. It consists of a core antenna complex that captures photons, and an electron transfer chain that converts photonic excitation into a charge separation. The D1/D2 (PsbA/PsbD) reaction center heterodimer binds P680, the primary electron donor of PSII as well as several subsequent electron acceptors. In Trichormus variabilis (strain ATCC 29413 / PCC 7937) (Anabaena variabilis), this protein is Photosystem II protein D1 3.